A 273-amino-acid chain; its full sequence is Large ribosomal subunit protein uL2 (273 aa).

A disordered region spans residues 228-273; that stretch reads VDHPHGGGEGKTSGGRHPVTPWGFPTKGKKTRKNKRTSKFIVKKRK. Residues 254-273 show a composition bias toward basic residues; it reads KGKKTRKNKRTSKFIVKKRK.

Belongs to the universal ribosomal protein uL2 family. As to quaternary structure, part of the 50S ribosomal subunit. Forms a bridge to the 30S subunit in the 70S ribosome.

Functionally, one of the primary rRNA binding proteins. Required for association of the 30S and 50S subunits to form the 70S ribosome, for tRNA binding and peptide bond formation. It has been suggested to have peptidyltransferase activity; this is somewhat controversial. Makes several contacts with the 16S rRNA in the 70S ribosome. The sequence is that of Large ribosomal subunit protein uL2 from Rickettsia rickettsii (strain Iowa).